The sequence spans 251 residues: Large ribosomal subunit protein uL16m (251 aa).

The N-terminal 29 residues, 1–29, are a transit peptide targeting the mitochondrion; it reads MWRLLTRAPAPLWRMHFSDTWAALPTSAG.

The protein belongs to the universal ribosomal protein uL16 family. Component of the mitochondrial ribosome large subunit (39S) which comprises a 16S rRNA and about 50 distinct proteins.

It is found in the mitochondrion. The protein is Large ribosomal subunit protein uL16m (Mrpl16) of Rattus norvegicus (Rat).